The primary structure comprises 409 residues: Argininosuccinate synthase (409 aa).

Residues 11–19 (AYSGGLDTS) and A38 each bind ATP. L-citrulline-binding residues include Y91 and S96. G121 is an ATP binding site. L-aspartate is bound by residues T123, N127, and D128. N127 is an L-citrulline binding site. The L-citrulline site is built by R131, S182, S191, E267, and Y279.

It belongs to the argininosuccinate synthase family. Type 1 subfamily. Homotetramer.

The protein localises to the cytoplasm. The enzyme catalyses L-citrulline + L-aspartate + ATP = 2-(N(omega)-L-arginino)succinate + AMP + diphosphate + H(+). The protein operates within amino-acid biosynthesis; L-arginine biosynthesis; L-arginine from L-ornithine and carbamoyl phosphate: step 2/3. The chain is Argininosuccinate synthase from Nitrobacter winogradskyi (strain ATCC 25391 / DSM 10237 / CIP 104748 / NCIMB 11846 / Nb-255).